Consider the following 210-residue polypeptide: Small ribosomal subunit protein eS8y (210 aa).

The interval 1-22 (MGISRDSIHKRRATGGKQKMWR) is disordered. A compositionally biased stretch (basic residues) spans 8-22 (IHKRRATGGKQKMWR).

Belongs to the eukaryotic ribosomal protein eS8 family.

In Arabidopsis thaliana (Mouse-ear cress), this protein is Small ribosomal subunit protein eS8y (RPS8B).